The primary structure comprises 906 residues: Ectonucleotide pyrophosphatase/phosphodiesterase family member 1 (906 aa).

Residues 1-22 (MERDGDQAGHGPRHGSAGNGRE) form a disordered region. Residues 1–58 (MERDGDQAGHGPRHGSAGNGRELESPAAASLLAPMDLGEEPLEKAERARPAKDPNTYK) are Cytoplasmic-facing. Residue Ser25 is modified to Phosphoserine. The Di-leucine motif motif lies at 27–34 (AAASLLAP). Residues 59–79 (VLSLVLSVCVLTTILGCIFGL) traverse the membrane as a helical; Signal-anchor for type II membrane protein segment. Residues 80-906 (KPSCAKEVKS…THLPIFSQED (827 aa)) are Extracellular-facing. SMB domains lie at 86-126 (EVKS…VEPT) and 127-171 (HIWT…DKKS). Cystine bridges form between Cys90-Cys104, Cys94-Cys122, Cys102-Cys115, Cys108-Cys114, Cys131-Cys148, Cys136-Cys166, Cys146-Cys159, Cys152-Cys158, Cys177-Cys223, and Cys185-Cys397. An N-linked (GlcNAc...) asparagine glycan is attached at Asn161. The interval 173–573 (VEETCESIDT…APNNGSHGSL (401 aa)) is phosphodiesterase. AMP-binding residues include Asp200, Thr238, and Asn259. 2 residues coordinate Zn(2+): Asp200 and Thr238. Thr238 functions as the AMP-threonine intermediate in the catalytic mechanism. Residues Thr238 and Asn259 each coordinate CMP. Residues Thr238 and Asn259 each coordinate dTMP. Thr238 and Asn259 together coordinate GMP. At Thr238 the chain carries Phosphothreonine. Asn267 carries an N-linked (GlcNAc...) asparagine glycan. The GMP site is built by Leu272, Lys277, and Tyr322. Residues Lys277 and Tyr322 each contribute to the AMP site. Residues Lys277 and Tyr322 each contribute to the CMP site. A dTMP-binding site is contributed by Tyr322. Asn323 carries N-linked (GlcNAc...) asparagine glycosylation. Asp358 provides a ligand contact to AMP. Residues Asp358, His362, Asp405, and His406 each coordinate Zn(2+). Asp358 contributes to the CMP binding site. Asp358 lines the dTMP pocket. Residue Asp358 coordinates GMP. Position 362 (His362) interacts with 2',3'-cGAMP. Residue His406 coordinates AMP. His406 contacts CMP. DTMP is bound at residue His406. Residue His406 coordinates GMP. Disulfide bonds link Cys413-Cys512, Cys462-Cys849, Cys596-Cys653, Cys607-Cys707, Cys609-Cys692, and Cys819-Cys829. A glycan (N-linked (GlcNAc...) asparagine) is linked at Asn459. Ser514 lines the 2',3'-cGAMP pocket. His517 is a binding site for AMP. Position 517 (His517) interacts with Zn(2+). His517 lines the CMP pocket. Residue His517 coordinates dTMP. Residue His517 coordinates GMP. N-linked (GlcNAc...) asparagine glycans are attached at residues Asn567 and Asn624. The linker stretch occupies residues 579–628 (KPIYNPSHPKEEGFLSQCPIKSTSNDLGCTCDPWIVPIKDFEKQLNLTTE). Residues 635–906 (HMTVPYGRPR…THLPIFSQED (272 aa)) are nuclease-like domain. Positions 781, 783, 785, 787, and 789 each coordinate Ca(2+).

This sequence belongs to the nucleotide pyrophosphatase/phosphodiesterase family. As to quaternary structure, ectonucleotide pyrophosphatase/phosphodiesterase family member 1: Homodimer. Ectonucleotide pyrophosphatase/phosphodiesterase family member 1: Interacts with INSR; leading to inhibit INSR autophosphorylation and subsequent activation of INSR kinase activity. Ectonucleotide pyrophosphatase/phosphodiesterase family member 1, secreted form: Monomeric. Requires Zn(2+) as cofactor. In terms of processing, N-glycosylated. The secreted form is produced through cleavage at Lys-85 by intracellular processing. In terms of tissue distribution, selectively expressed on the surface of antibody-secreting cells. Expressed in osteocytes and osteoclasts.

It localises to the cell membrane. The protein localises to the basolateral cell membrane. The protein resides in the secreted. It carries out the reaction Hydrolytically removes 5'-nucleotides successively from the 3'-hydroxy termini of 3'-hydroxy-terminated oligonucleotides.. It catalyses the reaction a ribonucleoside 5'-triphosphate + H2O = a ribonucleoside 5'-phosphate + diphosphate + H(+). The catalysed reaction is ATP + H2O = AMP + diphosphate + H(+). The enzyme catalyses UTP + H2O = UMP + diphosphate + H(+). It carries out the reaction GTP + H2O = GMP + diphosphate + H(+). It catalyses the reaction CTP + H2O = CMP + diphosphate + H(+). The catalysed reaction is 2',3'-cGAMP + 2 H2O = GMP + AMP + 2 H(+). The enzyme catalyses P(1),P(4)-bis(5'-adenosyl) tetraphosphate + H2O = AMP + ATP + 2 H(+). It carries out the reaction 3',5'-cyclic AMP + H2O = AMP + H(+). Its activity is regulated as follows. At low concentrations of ATP, a phosphorylated intermediate is formed which inhibits further hydrolysis. Nucleotide pyrophosphatase that generates diphosphate (PPi) and functions in bone mineralization and soft tissue calcification by regulating pyrophosphate levels. PPi inhibits bone mineralization and soft tissue calcification by binding to nascent hydroxyapatite crystals, thereby preventing further growth of these crystals. Preferentially hydrolyzes ATP, but can also hydrolyze other nucleoside 5' triphosphates such as GTP, CTP and UTP to their corresponding monophosphates with release of pyrophosphate, as well as diadenosine polyphosphates, and also 3',5'-cAMP to AMP. May also be involved in the regulation of the availability of nucleotide sugars in the endoplasmic reticulum and Golgi, and the regulation of purinergic signaling. Inhibits ectopic joint calcification and maintains articular chondrocytes by repressing hedgehog signaling; it is however unclear whether hedgehog inhibition is direct or indirect. Appears to modulate insulin sensitivity. Also involved in melanogenesis. Also able to hydrolyze 2',3'-cGAMP (cyclic GMP-AMP), a second messenger that activates TMEM173/STING and triggers type-I interferon production. 2',3'-cGAMP degradation takes place in the lumen or extracellular space, and not in the cytosol where it is produced; the role of 2',3'-cGAMP hydrolysis is therefore unclear. Not able to hydrolyze the 2',3'-cGAMP linkage isomer 3',3'-cGAMP. This chain is Ectonucleotide pyrophosphatase/phosphodiesterase family member 1, found in Mus musculus (Mouse).